A 460-amino-acid polypeptide reads, in one-letter code: Phosphoenolpyruvate carboxylase (460 aa).

It belongs to the PEPCase type 2 family. Homotetramer. Requires Mg(2+) as cofactor.

The enzyme catalyses oxaloacetate + phosphate = phosphoenolpyruvate + hydrogencarbonate. Its function is as follows. Catalyzes the irreversible beta-carboxylation of phosphoenolpyruvate (PEP) to form oxaloacetate (OAA), a four-carbon dicarboxylic acid source for the tricarboxylic acid cycle. In Pyrobaculum arsenaticum (strain DSM 13514 / JCM 11321 / PZ6), this protein is Phosphoenolpyruvate carboxylase.